The primary structure comprises 120 residues: Large ribosomal subunit protein eL34x (120 aa).

The segment at 31–50 (TYQTTNKRASGPKCPVTGKR) is disordered.

The protein belongs to the eukaryotic ribosomal protein eL34 family.

This chain is Large ribosomal subunit protein eL34x (RPL34C), found in Arabidopsis thaliana (Mouse-ear cress).